A 911-amino-acid polypeptide reads, in one-letter code: Ribonuclease J (911 aa).

A chloroplast-targeting transit peptide spans Met1 to Ser70. The tract at residues Ser58–Met90 is disordered. Residues Ser63–Lys74 are compositionally biased toward low complexity. His175, His177, Asp179, His180, His245, and Asp267 together coordinate Zn(2+). Residues Ala336–Asn338 and His468–His472 contribute to the substrate site. Residue His494 participates in Zn(2+) binding. 2 disordered regions span residues Val695–Asp723 and Glu735–Glu824. 2 stretches are compositionally biased toward basic and acidic residues: residues Ser713–Glu722 and Ala783–Ser795. Over residues Arg796 to Asp806 the composition is skewed to acidic residues. A Myb-like domain is found at Pro813–Ile877.

Belongs to the metallo-beta-lactamase superfamily. RNA-metabolizing metallo-beta-lactamase-like family. Bacterial RNase J subfamily. Homodimer. May be a subunit of the RNA degradosome. It depends on Zn(2+) as a cofactor. As to expression, moslty expressed in inflorescences, seedlings, leaves, flowers and flower buds, and, to a lower extent, in stems, siliques and roots.

Its subcellular location is the plastid. It is found in the chloroplast. Its function is as follows. Essential protein required during embryogenesis, especially in initiating and maintaining the organization of shoot apical meristems (SAMs), cotyledons, and hypocotyls. Involved in auxin-mediated pathways during embryogenesis. RNase that has both endonuclease and 5'-3' exonuclease activities. Involved in RNA surveillance to prevent overaccumulation of antisense RNA. Probably involved in maturation of rRNA and in some organisms also mRNA maturation and/or decay. The protein is Ribonuclease J of Arabidopsis thaliana (Mouse-ear cress).